We begin with the raw amino-acid sequence, 281 residues long: MVLSCELTLKELLESGAHFGHQTSRWNPKMKPFIFEEKNGLYIIDLAKTLAQLKKAVSCIQKTVEQGKSILFVGTKKQAKQIIKEAAIECGEFFASERWLGGMLTNMATIRNSVKTLNNIEIDLASSNSVLTKKETALLAKRHRKLLNNLEGVRHMNSLPGLLVVIDPGYERIAVAEAGKLGIPVMALVDTNCDPTPINHVIPCNDDSIKSIRLIVNALKDAIIDTKKRSGFEILSPVRPIERPAEEIVEGLPLPNEAQNDANSKEGFLVWTDTDNSEALR.

This sequence belongs to the universal ribosomal protein uS2 family.

The protein is Small ribosomal subunit protein uS2 (rpsB) of Chlamydia muridarum (strain MoPn / Nigg).